A 327-amino-acid chain; its full sequence is Methionyl-tRNA formyltransferase (327 aa).

121 to 124 contributes to the (6S)-5,6,7,8-tetrahydrofolate binding site; it reads SLLP.

It belongs to the Fmt family.

The catalysed reaction is L-methionyl-tRNA(fMet) + (6R)-10-formyltetrahydrofolate = N-formyl-L-methionyl-tRNA(fMet) + (6S)-5,6,7,8-tetrahydrofolate + H(+). Functionally, attaches a formyl group to the free amino group of methionyl-tRNA(fMet). The formyl group appears to play a dual role in the initiator identity of N-formylmethionyl-tRNA by promoting its recognition by IF2 and preventing the misappropriation of this tRNA by the elongation apparatus. The polypeptide is Methionyl-tRNA formyltransferase (Burkholderia multivorans (strain ATCC 17616 / 249)).